Here is a 330-residue protein sequence, read N- to C-terminus: GDP-mannose transporter (330 aa).

The Cytoplasmic segment spans residues 1–13 (MSQLKVDNGPLSH). The helical transmembrane segment at 14-34 (VANSGPISIGAYCFSSIMMTV) threads the bilayer. The Lumenal portion of the chain corresponds to 35 to 48 (TNKFVVNLKGFNMN). The helical transmembrane segment at 49-69 (FVMLFVQAAVCVNLLFFLRLL) threads the bilayer. Residues 70–81 (GYAKFRPLNRTD) lie on the Cytoplasmic side of the membrane. A helical transmembrane segment spans residues 82 to 98 (AKNWFPITIFLVLMIYT). At 99-104 (SSKSLQ) the chain is on the lumenal side. The chain crosses the membrane as a helical span at residues 105 to 124 (YLAVPIYTIFKNLTIILIAY). The Cytoplasmic segment spans residues 125–138 (GEVLFFGGSVTAME). The helical transmembrane segment at 139-155 (LSSFLLMVLSSVVATLG) threads the bilayer. Residues 156-170 (DQQALKKTADAGASL) are Lumenal-facing. The helical transmembrane segment at 171–191 (FNIGYMWMFINCLSSAAFVLV) threads the bilayer. At 192 to 203 (MRKRIKLTNFKD) the chain is on the cytoplasmic side. Residues 204–224 (FDTMFYNNILSMPVLLALSFL) form a helical membrane-spanning segment. At 225 to 241 (MEDWSTENLTKNLSRDS) the chain is on the lumenal side. Residues 242–262 (VTAMIISGMTAVCISYCSGWC) traverse the membrane as a helical segment. The Cytoplasmic portion of the chain corresponds to 263 to 269 (VRVTSST). Residues 270-290 (TYSMVGALNKLPIALSGLIFF) form a helical membrane-spanning segment. At 291-294 (DAPK) the chain is on the lumenal side. The helical transmembrane segment at 295 to 315 (NFLSIFSIFLGFLSGIVYAVA) threads the bilayer. The Cytoplasmic segment spans residues 316–330 (KQKKQQNPQPSAPIK).

It belongs to the TPT transporter family. SLC35D subfamily. In terms of assembly, homooligomer.

It localises to the golgi apparatus membrane. Its subcellular location is the cytoplasmic vesicle membrane. It is found in the endoplasmic reticulum membrane. Its function is as follows. Involved in the import of GDP-mannose from the cytoplasm into the Golgi lumen. This Kluyveromyces lactis (strain ATCC 8585 / CBS 2359 / DSM 70799 / NBRC 1267 / NRRL Y-1140 / WM37) (Yeast) protein is GDP-mannose transporter (VRG4).